The chain runs to 130 residues: Large ribosomal subunit protein bL21 (130 aa).

Belongs to the bacterial ribosomal protein bL21 family. In terms of assembly, part of the 50S ribosomal subunit. Contacts protein L20.

In terms of biological role, this protein binds to 23S rRNA in the presence of protein L20. The sequence is that of Large ribosomal subunit protein bL21 from Trichormus variabilis (strain ATCC 29413 / PCC 7937) (Anabaena variabilis).